The sequence spans 513 residues: Glycogen synthase (513 aa).

Residue Lys-47 coordinates ADP-alpha-D-glucose.

The protein belongs to the glycosyltransferase 1 family. Bacterial/plant glycogen synthase subfamily.

It catalyses the reaction [(1-&gt;4)-alpha-D-glucosyl](n) + ADP-alpha-D-glucose = [(1-&gt;4)-alpha-D-glucosyl](n+1) + ADP + H(+). It participates in glycan biosynthesis; glycogen biosynthesis. Its function is as follows. Synthesizes alpha-1,4-glucan chains using ADP-glucose. The polypeptide is Glycogen synthase (Pseudomonas paraeruginosa (strain DSM 24068 / PA7) (Pseudomonas aeruginosa (strain PA7))).